Consider the following 217-residue polypeptide: Probable transaldolase (217 aa).

The active-site Schiff-base intermediate with substrate is Lys-83.

The protein belongs to the transaldolase family. Type 3B subfamily.

It is found in the cytoplasm. The enzyme catalyses D-sedoheptulose 7-phosphate + D-glyceraldehyde 3-phosphate = D-erythrose 4-phosphate + beta-D-fructose 6-phosphate. The protein operates within carbohydrate degradation; pentose phosphate pathway; D-glyceraldehyde 3-phosphate and beta-D-fructose 6-phosphate from D-ribose 5-phosphate and D-xylulose 5-phosphate (non-oxidative stage): step 2/3. Functionally, transaldolase is important for the balance of metabolites in the pentose-phosphate pathway. The protein is Probable transaldolase (tal) of Methanocaldococcus jannaschii (strain ATCC 43067 / DSM 2661 / JAL-1 / JCM 10045 / NBRC 100440) (Methanococcus jannaschii).